Reading from the N-terminus, the 291-residue chain is Stomatin-like protein 3 (291 aa).

Phosphoserine is present on S7. The chain crosses the membrane as a helical; Signal-anchor for type III membrane protein span at residues 29-49; that stretch reads WILFSLSFLLVIITFPISIWM. At 50-291 the chain is on the cytoplasmic side; it reads CLKIIKEYER…DNHKKLPNKA (242 aa). S241 is modified (phosphoserine).

The protein belongs to the band 7/mec-2 family. In terms of assembly, homodimer. Interacts with PIEZO1 and PIEZO2.

Its subcellular location is the cell membrane. In terms of biological role, required for the function of many mechanoreceptors. Modulate mechanotransduction channels and acid-sensing ion channels (ASIC) proteins. Potentiates PIEZO1 and PIEZO2 function by increasing their sensitivity to mechanical stimulations. The protein is Stomatin-like protein 3 (STOML3) of Homo sapiens (Human).